The following is a 158-amino-acid chain: U4/U6.U5 small nuclear ribonucleoprotein 27 kDa protein (158 aa).

Residues 1-102 (MGRSRSRSPE…AEDLEGKTEE (102 aa)) form a disordered region. The segment covering 13 to 59 (RERRRSRSASRERERRRRERSRSRERRRSRSRSPHRRRSRSPRRHRS) has biased composition (basic residues). Residues 66–101 (RLKDRRDDDKKEPKESKGGGSKERQLAAEDLEGKTE) show a composition bias toward basic and acidic residues.

Belongs to the SNUT3 family. Part of a tri-snRNP complex.

Its subcellular location is the nucleus. Its function is as follows. May play a role in mRNA splicing. This is U4/U6.U5 small nuclear ribonucleoprotein 27 kDa protein (snrnp27) from Xenopus laevis (African clawed frog).